The following is a 232-amino-acid chain: Chalcone synthase (232 aa).

Residue Cys-7 is part of the active site.

Belongs to the thiolase-like superfamily. Chalcone/stilbene synthases family.

The enzyme catalyses (E)-4-coumaroyl-CoA + 3 malonyl-CoA + 3 H(+) = 2',4,4',6'-tetrahydroxychalcone + 3 CO2 + 4 CoA. It functions in the pathway secondary metabolite biosynthesis; flavonoid biosynthesis. The primary product of this enzyme is 4,2',4',6'-tetrahydroxychalcone (also termed naringenin-chalcone or chalcone) which can under specific conditions spontaneously isomerize into naringenin. In Malus domestica (Apple), this protein is Chalcone synthase (CHS).